The following is a 342-amino-acid chain: RNA 3'-terminal phosphate cyclase (342 aa).

ATP is bound by residues glutamine 100 and 283 to 287; that span reads FLGDQ. Histidine 307 (tele-AMP-histidine intermediate) is an active-site residue.

This sequence belongs to the RNA 3'-terminal cyclase family. Type 1 subfamily.

It localises to the cytoplasm. The enzyme catalyses a 3'-end 3'-phospho-ribonucleotide-RNA + ATP = a 3'-end 2',3'-cyclophospho-ribonucleotide-RNA + AMP + diphosphate. Functionally, catalyzes the conversion of 3'-phosphate to a 2',3'-cyclic phosphodiester at the end of RNA. The mechanism of action of the enzyme occurs in 3 steps: (A) adenylation of the enzyme by ATP; (B) transfer of adenylate to an RNA-N3'P to produce RNA-N3'PP5'A; (C) and attack of the adjacent 2'-hydroxyl on the 3'-phosphorus in the diester linkage to produce the cyclic end product. The biological role of this enzyme is unknown but it is likely to function in some aspects of cellular RNA processing. In Pyrococcus abyssi (strain GE5 / Orsay), this protein is RNA 3'-terminal phosphate cyclase (rtcA).